The primary structure comprises 460 residues: tRNA modification GTPase MnmE (460 aa).

3 residues coordinate (6S)-5-formyl-5,6,7,8-tetrahydrofolate: R29, E91, and R131. The region spanning G226–G383 is the TrmE-type G domain. K(+) is bound at residue N236. GTP is bound by residues N236 to S241, T255 to T261, and D280 to G283. S240 is a binding site for Mg(2+). Residues T255, L257, and T260 each coordinate K(+). T261 serves as a coordination point for Mg(2+). K460 provides a ligand contact to (6S)-5-formyl-5,6,7,8-tetrahydrofolate.

This sequence belongs to the TRAFAC class TrmE-Era-EngA-EngB-Septin-like GTPase superfamily. TrmE GTPase family. As to quaternary structure, homodimer. Heterotetramer of two MnmE and two MnmG subunits. The cofactor is K(+).

Its subcellular location is the cytoplasm. Functionally, exhibits a very high intrinsic GTPase hydrolysis rate. Involved in the addition of a carboxymethylaminomethyl (cmnm) group at the wobble position (U34) of certain tRNAs, forming tRNA-cmnm(5)s(2)U34. The chain is tRNA modification GTPase MnmE from Synechococcus sp. (strain WH7803).